The sequence spans 842 residues: G-type lectin S-receptor-like serine/threonine-protein kinase At1g11330 (842 aa).

The N-terminal stretch at 1–29 (MVVSVTIRRRFVLLLLACTCLLSRRLCFG) is a signal peptide. Topologically, residues 30-444 (EDRITFSSPI…AHSELKTHSN (415 aa)) are extracellular. Residues 32–157 (RITFSSPIKD…RNNGEILWES (126 aa)) form the Bulb-type lectin domain. N-linked (GlcNAc...) asparagine glycans are attached at residues Asn-63, Asn-94, Asn-122, Asn-130, Asn-196, and Asn-260. One can recognise an EGF-like; atypical domain in the interval 294–330 (PYTDCDAYGRCGRFGSCHAGENPPCKCVKGFVPKNNT). Cystine bridges form between Cys-298–Cys-310 and Cys-304–Cys-318. Asn-328, Asn-336, Asn-354, and Asn-396 each carry an N-linked (GlcNAc...) asparagine glycan. The region spanning 349-435 (CERQRNVSNG…SGIDLFIRVA (87 aa)) is the PAN domain. 2 cysteine pairs are disulfide-bonded: Cys-389–Cys-410 and Cys-393–Cys-399. The chain crosses the membrane as a helical span at residues 445–465 (LAVMIAAPVIGVMLIAAVCVL). Over 466–842 (LACRKYKKRP…DVSLTAVTGR (377 aa)) the chain is Cytoplasmic. In terms of domain architecture, Protein kinase spans 524–810 (FSLRNKLGQG…SLADPKQPAF (287 aa)). ATP contacts are provided by residues 530-538 (LGQGGFGPV) and Lys-552. Phosphoserine is present on residues Ser-558 and Ser-573. Residues 613–630 (MKQKILDWKTRFNIMEGI) are caM-binding. Asp-649 acts as the Proton acceptor in catalysis. Phosphoserine is present on residues Ser-653 and Ser-666. Thr-683 is subject to Phosphothreonine. A phosphoserine mark is found at Ser-726, Ser-727, Ser-821, and Ser-830. The tract at residues 814–842 (RGASEAESSDQSSQKVSINDVSLTAVTGR) is disordered. Low complexity predominate over residues 818 to 827 (EAESSDQSSQ). Polar residues predominate over residues 828–842 (KVSINDVSLTAVTGR). Thr-837 is subject to Phosphothreonine.

Belongs to the protein kinase superfamily. Ser/Thr protein kinase family.

The protein resides in the cell membrane. It carries out the reaction L-seryl-[protein] + ATP = O-phospho-L-seryl-[protein] + ADP + H(+). It catalyses the reaction L-threonyl-[protein] + ATP = O-phospho-L-threonyl-[protein] + ADP + H(+). This Arabidopsis thaliana (Mouse-ear cress) protein is G-type lectin S-receptor-like serine/threonine-protein kinase At1g11330.